Reading from the N-terminus, the 148-residue chain is UPF0260 protein YcgN (148 aa).

Belongs to the UPF0260 family.

This chain is UPF0260 protein YcgN, found in Salmonella paratyphi A (strain AKU_12601).